Here is a 68-residue protein sequence, read N- to C-terminus: MAMTNEEKVLAIREKLNIVNQGLLDPEKYKNANEEQLTDIYDFVQSRERLSPSEVTAIADALGQLRHD.

Belongs to the UPF0435 family.

This Staphylococcus aureus (strain bovine RF122 / ET3-1) protein is UPF0435 protein SAB1812c.